Consider the following 489-residue polypeptide: Cytochrome P450 monooxygenase bfoB (489 aa).

An N-terminal signal peptide occupies residues 1-18; sequence MLALYLIAGLLVGLLVYR. N-linked (GlcNAc...) asparagine glycans are attached at residues N113, N348, and N386. C429 is a binding site for heme.

The protein belongs to the cytochrome P450 family. The cofactor is heme.

It catalyses the reaction 2 fonsecin B + NADPH + O2 + H(+) = bifonsecin B + NADP(+) + 2 H2O. The enzyme catalyses 2 rubrofusarin B + NADPH + O2 + 3 H(+) = nigerone + NADP(+) + 2 H2O. It functions in the pathway secondary metabolite biosynthesis. Functionally, cytochrome P450 monooxygenase; part of the gene cluster that mediates the biosynthesis of bifonsecin B, a dimeric gamma-naphthopyrone. The first step in the biosynthesis of bifonsecin B is the production of gamma-naphthopyrone precursor YWA1 by the non-reducing polyketide synthase albA, via condensation of one acetyl-CoA starter unit with 6 malonyl-CoA units. YWA1 is then methylated by bfoE at position C-6 to yield foncesin which is further methylated at position C-8 by bfoD to produce fonsecin B. A key enzyme in the biosynthetic pathway is the cytochrome P450 monooxygenase bfoB which catalyzes the oxidative dimerization of fonsecin B to bifonsecin B. Bfob also catalyzes the oxidative dimerization of rubrofusarin B into nigerone. The stereoselectivity of bfoB is influenced by the two natural monomeric substrates; homodimerization of fonsecin B yields a stereochemically pure biaryl, M-foncerine B, while rubrofusarin B yields a mixture of enantiomers M- and P-nigerone. This chain is Cytochrome P450 monooxygenase bfoB, found in Aspergillus brasiliensis (strain CBS 101740 / IMI 381727 / IBT 21946).